The following is a 185-amino-acid chain: Peptide deformylase (185 aa).

Fe cation-binding residues include Cys112 and His155. Residue Glu156 is part of the active site. His159 lines the Fe cation pocket.

It belongs to the polypeptide deformylase family. Fe(2+) serves as cofactor.

The enzyme catalyses N-terminal N-formyl-L-methionyl-[peptide] + H2O = N-terminal L-methionyl-[peptide] + formate. Functionally, removes the formyl group from the N-terminal Met of newly synthesized proteins. Requires at least a dipeptide for an efficient rate of reaction. N-terminal L-methionine is a prerequisite for activity but the enzyme has broad specificity at other positions. In Latilactobacillus sakei subsp. sakei (strain 23K) (Lactobacillus sakei subsp. sakei), this protein is Peptide deformylase.